The sequence spans 194 residues: MAIKLIVGLANPGAEYAATRHNAGAWYIDLLAERLRAPLREEPKFFGYTSRITLEGEDVRLLVPTTFMNLSGKAVGAMASFYRIQPDEILVAHDELDLPPGVAKFKLGGGHGGHNGLKDIISKLGNNPNFHRLRVGIGHPGDKNKVVGFVLGKPPVSEQKLIDEAIDEAARCTELWFKEGLAKATSRLHTFKAQ.

Tyr-16 lines the tRNA pocket. The active-site Proton acceptor is His-21. Residues Phe-67, Asn-69, and Asn-115 each contribute to the tRNA site.

The protein belongs to the PTH family. As to quaternary structure, monomer.

The protein resides in the cytoplasm. It carries out the reaction an N-acyl-L-alpha-aminoacyl-tRNA + H2O = an N-acyl-L-amino acid + a tRNA + H(+). Hydrolyzes ribosome-free peptidyl-tRNAs (with 1 or more amino acids incorporated), which drop off the ribosome during protein synthesis, or as a result of ribosome stalling. Its function is as follows. Catalyzes the release of premature peptidyl moieties from peptidyl-tRNA molecules trapped in stalled 50S ribosomal subunits, and thus maintains levels of free tRNAs and 50S ribosomes. The sequence is that of Peptidyl-tRNA hydrolase from Salmonella paratyphi B (strain ATCC BAA-1250 / SPB7).